We begin with the raw amino-acid sequence, 233 residues long: NAD-dependent protein deacylase (233 aa).

A Deacetylase sirtuin-type domain is found at 1–230 (MKNIMILSGA…ALDIENFMKD (230 aa)). 9 to 28 (GAGLSAPSGLKTFRDNDGLW) serves as a coordination point for NAD(+). The substrate site is built by Tyr-53 and Arg-56. 88–91 (QNVD) contributes to the NAD(+) binding site. The Proton acceptor role is filled by His-106. 4 residues coordinate Zn(2+): Cys-114, Cys-117, Cys-133, and Cys-136. NAD(+)-binding positions include 172-174 (GTS) and Ile-213.

Belongs to the sirtuin family. Class III subfamily. Zn(2+) is required as a cofactor.

The protein localises to the cytoplasm. The catalysed reaction is N(6)-acetyl-L-lysyl-[protein] + NAD(+) + H2O = 2''-O-acetyl-ADP-D-ribose + nicotinamide + L-lysyl-[protein]. It carries out the reaction N(6)-succinyl-L-lysyl-[protein] + NAD(+) + H2O = 2''-O-succinyl-ADP-D-ribose + nicotinamide + L-lysyl-[protein]. Functionally, NAD-dependent lysine deacetylase and desuccinylase that specifically removes acetyl and succinyl groups on target proteins. Modulates the activities of several proteins which are inactive in their acylated form. The chain is NAD-dependent protein deacylase from Campylobacter jejuni (strain RM1221).